Consider the following 874-residue polypeptide: Alanine--tRNA ligase (874 aa).

Zn(2+) contacts are provided by His559, His563, Cys661, and His665.

It belongs to the class-II aminoacyl-tRNA synthetase family. Zn(2+) serves as cofactor.

The protein resides in the cytoplasm. It carries out the reaction tRNA(Ala) + L-alanine + ATP = L-alanyl-tRNA(Ala) + AMP + diphosphate. Catalyzes the attachment of alanine to tRNA(Ala) in a two-step reaction: alanine is first activated by ATP to form Ala-AMP and then transferred to the acceptor end of tRNA(Ala). Also edits incorrectly charged Ser-tRNA(Ala) and Gly-tRNA(Ala) via its editing domain. The chain is Alanine--tRNA ligase from Microcystis aeruginosa (strain NIES-843 / IAM M-2473).